Consider the following 101-residue polypeptide: uncharacterized protein (101 aa).

This is an uncharacterized protein from Escherichia coli (strain K12).